A 496-amino-acid chain; its full sequence is Lysine--tRNA ligase (496 aa).

The Mg(2+) site is built by Glu408 and Glu415.

It belongs to the class-II aminoacyl-tRNA synthetase family. Homodimer. The cofactor is Mg(2+).

It is found in the cytoplasm. It carries out the reaction tRNA(Lys) + L-lysine + ATP = L-lysyl-tRNA(Lys) + AMP + diphosphate. In Legionella pneumophila (strain Paris), this protein is Lysine--tRNA ligase.